The sequence spans 942 residues: Calcium-activated chloride channel regulator 2 (942 aa).

Residues 1-32 (MTHRDSTGPVIGLKLVTLLFTLSPELLFLGAG) form the signal peptide. Topologically, residues 33–905 (LKLKENGYDG…SRDDLILKGV (873 aa)) are extracellular. Residues 54–205 (DLKLITNIKE…CSSDITGVFV (152 aa)) are metalloprotease domain. N-linked (GlcNAc...) asparagine glycosylation is found at Asn74 and Asn97. His164 serves as a coordination point for Zn(2+). The active site involves Glu165. 2 residues coordinate Zn(2+): His168 and Asp175. N-linked (GlcNAc...) asparagine glycans are attached at residues Asn231, Asn235, Asn254, and Asn286. The VWFA domain maps to 311 to 483 (VVCLVIDVSR…NGMTEAFVRI (173 aa)). N-linked (GlcNAc...) asparagine glycosylation is found at Asn522, Asn580, Asn637, and Asn821. The chain crosses the membrane as a helical span at residues 906–926 (LTTVGLIAILCLIMVVAHCIF). Residues 927 to 942 (NRKKRPSRKENETKFL) are Cytoplasmic-facing.

This sequence belongs to the CLCR family. Post-translationally, the translation product is autoproteolytically cleaved by the metalloprotease domain in the endoplasmic reticulum into a N-terminal and a C-terminal products that remain physically associated with each other. The cleavage is necessary for calcium-activated chloride channel (CaCC) activation activity. N-glycosylated. As to expression, highly expressed in eye, spleen, lung, kidney, uterus, and endothelial cells. Weakly expressed in heart and throughout the gastrointestinal tract. Highly expressed in mammary cell lines. Its expression in immortalized cell line HC11 correlates with slow or arrested growth. Re-expression in mammary tumor cells reduces colony survival.

The protein resides in the cell membrane. Its subcellular location is the basal cell membrane. It localises to the cell junction. Functionally, plays a role in modulating chloride current across the plasma membrane in a calcium-dependent manner, and cell adhesion. Involved in basal cell adhesion and/or stratification of squamous epithelia. May act as a tumor suppressor in breast and colorectal cancer. Plays a key role for cell adhesion in the beginning stages of lung metastasis via the binding to ITGB4. In Mus musculus (Mouse), this protein is Calcium-activated chloride channel regulator 2 (Clca2).